A 927-amino-acid polypeptide reads, in one-letter code: Translation initiation factor IF-2 (927 aa).

A disordered region spans residues 27-338; it reads LGLPVKSHAS…APKPVTERKF (312 aa). Polar residues predominate over residues 49-69; it reads SFSSSKTKAPTNSVQTNQGVK. Basic and acidic residues-rich tracts occupy residues 70 to 86 and 101 to 138; these read TESK…DDKP and FKAE…DRRH. A compositionally biased stretch (low complexity) spans 146-159; it reads GNRNDNRQGQQNNR. Composition is skewed to basic and acidic residues over residues 160-171, 202-226, and 234-257; these read NKNDGRYADHKQ, YSRH…EQEL, and AQEE…KEIV. The span at 300-316 shows a compositional bias: low complexity; sequence NWNNQNQVRNQRNSNWN. The tr-type G domain maps to 428-597; sequence ERPPVVTIMG…LLVAEMEELK (170 aa). The G1 stretch occupies residues 437–444; that stretch reads GHVDHGKT. 437–444 contributes to the GTP binding site; it reads GHVDHGKT. The G2 stretch occupies residues 462-466; sequence GITQH. A G3 region spans residues 483 to 486; the sequence is DTPG. GTP is bound by residues 483-487 and 537-540; these read DTPGH and NKID. Positions 537–540 are G4; the sequence is NKID. Residues 573-575 form a G5 region; sequence SAK.

The protein belongs to the TRAFAC class translation factor GTPase superfamily. Classic translation factor GTPase family. IF-2 subfamily.

The protein resides in the cytoplasm. Functionally, one of the essential components for the initiation of protein synthesis. Protects formylmethionyl-tRNA from spontaneous hydrolysis and promotes its binding to the 30S ribosomal subunits. Also involved in the hydrolysis of GTP during the formation of the 70S ribosomal complex. The protein is Translation initiation factor IF-2 of Streptococcus agalactiae serotype Ia (strain ATCC 27591 / A909 / CDC SS700).